The sequence spans 651 residues: Acetyl-coenzyme A synthetase (651 aa).

Residues 191-194 (RGGK), Thr-311, and Asn-335 contribute to the CoA site. ATP is bound by residues 387–389 (GEP), 411–416 (DTWWQT), Asp-500, and Arg-515. Ser-523 serves as a coordination point for CoA. Arg-526 is a binding site for ATP. Val-537, His-539, and Val-542 together coordinate Mg(2+). Arg-584 provides a ligand contact to CoA. Lys-609 carries the N6-acetyllysine modification.

Belongs to the ATP-dependent AMP-binding enzyme family. It depends on Mg(2+) as a cofactor. Acetylated. Deacetylation by the SIR2-homolog deacetylase activates the enzyme.

The catalysed reaction is acetate + ATP + CoA = acetyl-CoA + AMP + diphosphate. Catalyzes the conversion of acetate into acetyl-CoA (AcCoA), an essential intermediate at the junction of anabolic and catabolic pathways. AcsA undergoes a two-step reaction. In the first half reaction, AcsA combines acetate with ATP to form acetyl-adenylate (AcAMP) intermediate. In the second half reaction, it can then transfer the acetyl group from AcAMP to the sulfhydryl group of CoA, forming the product AcCoA. In Pseudomonas syringae pv. syringae (strain B728a), this protein is Acetyl-coenzyme A synthetase.